Consider the following 229-residue polypeptide: Protein OPG034 (229 aa).

The protein belongs to the orthopoxvirus OPG034 family.

The protein is Protein OPG034 (OPG034) of Vaccinia virus (strain Western Reserve) (VACV).